Here is a 359-residue protein sequence, read N- to C-terminus: Mitochondrial glutathione transporter SLC25A39 (359 aa).

At 1-14 (MADQDPGGISPLQQ) the chain is on the mitochondrial intermembrane side. Solcar repeat units lie at residues 9–151 (ISPL…LKAF), 159–243 (SDLY…VKSW), and 253–347 (TSVG…GKNF). The chain crosses the membrane as a helical span at residues 15–35 (MVASGAGAVVTSLFMTPLDVV). Topologically, residues 36–121 (KVRLQSQRPS…VKIVRHEGTR (86 aa)) are mitochondrial matrix. Residues C74, C78, C88, and C94 each coordinate [2Fe-2S] cluster. A helical membrane pass occupies residues 122-142 (TLWSGLPATLVMTVPATAAYF). Over 143 to 164 (TAYDQLKAFLCGRALTSDLYAP) the chain is Mitochondrial intermembrane. The chain crosses the membrane as a helical span at residues 165 to 185 (MVAGALARLGTVTVISPLELV). The Mitochondrial matrix portion of the chain corresponds to 186–214 (RTKLQAQHLSYRELGTCVRAAVAQGGWRS). Residues 215–235 (LWLGWGPTALRDVPFSALYWF) form a helical membrane-spanning segment. At 236–255 (NYELVKSWLSGLRPKDQTSV) the chain is on the mitochondrial intermembrane side. A helical membrane pass occupies residues 256-276 (GISFVAGGISGMVAATLTLPF). Over 277–317 (DVVKTQRQVALGAVEALRVMPLNTDSTWLLLRRILAESGTR) the chain is Mitochondrial matrix. A helical transmembrane segment spans residues 318 to 338 (GLFAGFLPRIIKAAPSCAIMI). The Mitochondrial intermembrane portion of the chain corresponds to 339–359 (STYEFGKNFFQRLNREQLLSP).

Belongs to the mitochondrial carrier (TC 2.A.29) family. In terms of processing, cleaved and degraded by AFG3L2; degradation by AFG3L2 is regulated by the ability of SLC25A39 to bind iron-sulfur. In absence of mitochondrial glutathione, SLC25A39 binds iron-sulfur, preventing cleavage and degradation by AFG3L2. The presence of mitochondrial glutathione prevents iron-sulfur-binding to SLC25A39, promoting cleavage and degradation by AFG3L2.

The protein localises to the mitochondrion inner membrane. It catalyses the reaction glutathione(in) = glutathione(out). With respect to regulation, the activity of SLC25A39 is regulated by levels of mitochondrial glutathione via its ability to bind [2Fe-2S] iron-sulfur cluster. Upon physiological levels of mitochondrial glutathione, glutathione prevents iron-sulfur-binding to SLC25A39 promoting cleavage and degradation by AFG3L2. Upon depletion of mitochondrial glutathione, SLC25A39 binds iron-sulfur, preventing cleavage and degradation by AFG3L2. Its function is as follows. Mitochondrial transporter required for glutathione import into mitochondria. Glutathione, which plays key roles in oxidative metabolism, is produced exclusively in the cytosol and is imported in many organelles. Mitochondrial glutathione is required for the activity and stability of proteins containing iron-sulfur clusters, as well as erythropoiesis. This Bos taurus (Bovine) protein is Mitochondrial glutathione transporter SLC25A39 (SLC25A39).